The sequence spans 446 residues: GRAM domain-containing protein 2B (446 aa).

Residue Met1 is modified to N-acetylmethionine. The tract at residues 1–120 (MVKKRLPSND…RKKSSSSSQY (120 aa)) is disordered. The segment covering 29 to 43 (SRSSTDSPSSVFFSS) has biased composition (low complexity). Positions 95–113 (DKNDCKTESKNDPKTERKK) are enriched in basic and acidic residues. One can recognise a GRAM domain in the interval 124-191 (MHFHKLFLSV…FSVTLIKKTK (68 aa)). Polar residues predominate over residues 234–247 (TSVGNSPNPSSAEN). The disordered stretch occupies residues 234–253 (TSVGNSPNPSSAENSFRADR). Phosphoserine occurs at positions 239, 256, and 266. Positions 276 to 298 (RQDMEGYSSSGSQTPESENSRDF) are disordered. Residues 282 to 292 (YSSSGSQTPES) show a composition bias toward polar residues.

This Pongo abelii (Sumatran orangutan) protein is GRAM domain-containing protein 2B (GRAMD2B).